The following is a 974-amino-acid chain: Villin-4 (974 aa).

Gelsolin-like repeat units follow at residues 29–79 (FIPT…DEAG), 150–190 (VHVK…QERA), 262–305 (GQAN…DDRK), 394–451 (LQVW…EERG), 532–572 (MQAI…TDQE), and 634–675 (LKVT…KNKL). A disordered region spans residues 738 to 783 (VKNGGTPVADKPKRRTPASYGGRASVPDKSQQRSRSMSFSPDRVRV). Phosphoserine occurs at positions 777 and 787. Disordered stretches follow at residues 801 to 833 (NARN…APKS) and 845 to 930 (KIPP…PVSD). A compositionally biased stretch (low complexity) spans 824-833 (SSKFAPAPKS). Basic and acidic residues predominate over residues 872–887 (NSKEQEEKKENDKEEG). The span at 888-898 (SMSSRIESLTI) shows a compositional bias: polar residues. Residue Ser890 is modified to Phosphoserine. The HP domain occupies 909 to 974 (EEDLPAHPYD…NKFKMAVQLF (66 aa)). Positions 912 to 921 (LPAHPYDRLK) are enriched in basic and acidic residues.

Belongs to the villin/gelsolin family. Preferentially expressed in vegetative tissues. Detected in the whole seedling, hypocotyl, cotyledon, primary root, roots hair cells and trichomes. Expressed in flowers but not in the silique.

It is found in the cytoplasm. The protein resides in the cytoskeleton. Binds actin and actin filament bundles in a Ca(2+)-insensitive manner, but caps the barbed end of actin filaments and is able to sever them in a calcium-dependent manner. Involved in root hair growth through regulating actin organization in a Ca(2+)-dependent manner. This Arabidopsis thaliana (Mouse-ear cress) protein is Villin-4.